A 944-amino-acid chain; its full sequence is E3 ubiquitin-protein ligase HACE1 (944 aa).

7 ANK repeats span residues 23–55 (LPED…NSKF), 64–93 (VKRS…DPNY), 97–126 (SGCT…DVNI), 130–159 (EGLT…NVDV), 163–192 (MGQT…DINR), 196–226 (SGAT…YLPD), and 228–253 (NGVT…QHHP). Positions 609–944 (NCEKLKQGIA…HCGSYGYTMA (336 aa)) constitute an HECT domain. Cysteine 911 functions as the Glycyl thioester intermediate in the catalytic mechanism.

It localises to the golgi apparatus. Its subcellular location is the golgi stack membrane. The protein resides in the cytoplasm. The protein localises to the endoplasmic reticulum. It catalyses the reaction S-ubiquitinyl-[E2 ubiquitin-conjugating enzyme]-L-cysteine + [acceptor protein]-L-lysine = [E2 ubiquitin-conjugating enzyme]-L-cysteine + N(6)-ubiquitinyl-[acceptor protein]-L-lysine.. It participates in protein modification; protein ubiquitination. Functionally, E3 ubiquitin-protein ligase involved in Golgi membrane fusion and regulation of small GTPases. Acts as a regulator of Golgi membrane dynamics during the cell cycle: recruited to Golgi membrane by Rab proteins and regulates postmitotic Golgi membrane fusion. Acts by mediating ubiquitination during mitotic Golgi disassembly, ubiquitination serving as a signal for Golgi reassembly later, after cell division. In Xenopus laevis (African clawed frog), this protein is E3 ubiquitin-protein ligase HACE1 (hace1).